We begin with the raw amino-acid sequence, 121 residues long: RxLR effector protein PexRD2 (121 aa).

A signal peptide spans 1–18 (MRLSYVFVVFAASLLVTA). Residues 38–56 (RLLRKHYTAAENDGDSEAR) carry the RxLR-dEER motif. A WY domain region spans residues 57–121 (ALNPEKMKTM…LNYVAEHTAV (65 aa)).

It belongs to the RxLR effector family.

The protein localises to the secreted. Its subcellular location is the host cytoplasm. The protein resides in the host nucleus. Secreted effector involved in P.mirabilis colonization of host plants. May perturb the signaling of cell death associated with plant immunity, via interaction with a host MAP kinase. The chain is RxLR effector protein PexRD2 from Phytophthora mirabilis.